Consider the following 1470-residue polypeptide: MAAAPSASGRRSMSWGSSISQSFRQAEADDPFGRAASQQGHDDDEENLRWAALEKLPTYDRMRRGVIRTALLHHDGGGDGGGAAAAAKDGRMELVDIQKLAAGNLGRALLDRVFQDDSERFLRRLRDRIDMVGIELPTIEVRYEQLSIQAEVFVGSRALPTLTNAATNVLQGLIGRFGSSNKRTINILQDVSGIIKPSRMTLLLGPPSSGKSTLMRALTGKLDKNLKVSGDITYCGHTFSEFYPERTSAYVSQYDLHNAEMTVRETLDFSGRCLGIGARYDMLAELARRERNAGIKPDPEIDAFMKATAVQGHKTNITTDVTLKALGLDICADIIIGDEMIRGISGGQKKRVTTGEMLTGPARALFMDEISTGLDSSSTFEIVKYIGHLVHVMNETVMISLLQPPPETYNLFDDIILLSEGYIVYHGPRENILEFFENAGFRCPERKGIADFLQEVTSKKDQQQYWYHDQERYRYVSVPEFAQRFKSFHVGQKMQKEMQIPYDKSSTHPAALTTTKYGLSSWESLRAVMSREWLLMKRNSFIYIFKVTQLIILAFMSMTVFLRTKMPSGTISDGTKFLGALTFSLITILFNGFAELQLTIKKLPVFYKHRDFLFFPAWTFGVANILLKVPVSLVEAAVWVVLTYYVMGFAPSAGRFFRQFIAFFVTHQMAMAMFRFLGAILKTMVVANTFGMFVLLIVFIFGGFLISRNDIKPWWIWGYWASPMMYSQQAISINEFLASRWAIPNTDATIDEPTVGKAILKSKGLITSDGGFWISIGALIGFLVVFNILYILALTYLSPGGSSNTIVSDEDSEDKTDMKTRNEQQMSQIVHNNGASNTSATSSIPMSGSRSTNQQSRSQIVLPFQPLSLCFNHVNYYVDMPTEMKEQGFTESRLQLLSDISGVFRPGVLTALVGVSGAGKTTLMDVLAGRKTSGVIEGDITLSGYPKKQETFARISGYCEQTDIHSPNVTVYESILYSAWLRLSSDVDTNTRKMFVDEVMSLVELDVLRNALVGLPGVSGLSTEQRKRLTIAVELVANPSVIFMDEPTSGLDARAAAIVMRTVRNTVNTGRTVVCTIHQPSIDIFESFDELLLLKRGGQVIYAGELGRHSHKLVEYFEAVPGVPKITEGYNPATWMLEVTSPIAEARLNVNFAEIYANSELYRKNQELIKELSTPPPGYQDLSFPTKYSQNFYSQCIANFWKQYRSYWKNPPYNAMRYLMTLLNGLVFGTVFWQKGTKISSQQDLFNLLGATYAATFFLGAANCITVQPVVSIERTVFYRERAAGMYSSLSYAFAQACVEVIYNILQGILYTIIIYAMIGYDWKADKFFYFMFFIVASFNYFTLFGMMLVACTPSAMLANILISFVLPLWNLFAGFLVVRPLIPIWWRWYYWANPVSWTIYGVVASQFGKNGDVLSVPGGSPTVVKQFLEDNLGMRHSFLGYVVLTHFGYIIVFFFIFGYAIKYFNFQKR.

The tract at residues 1–47 is disordered; sequence MAAAPSASGRRSMSWGSSISQSFRQAEADDPFGRAASQQGHDDDEEN. Positions 9-24 are enriched in polar residues; sequence GRRSMSWGSSISQSFR. The region spanning 172–445 is the ABC transporter 1 domain; the sequence is GLIGRFGSSN…FENAGFRCPE (274 aa). 205–212 lines the ATP pocket; the sequence is GPPSSGKS. The ABC transmembrane type-2 1 domain occupies 523–736; the sequence is ESLRAVMSRE…SQQAISINEF (214 aa). 6 helical membrane passes run 541 to 561, 577 to 597, 629 to 649, 660 to 680, 686 to 706, and 772 to 792; these read FIYI…MTVF, FLGA…AELQ, VPVS…VMGF, FIAF…LGAI, VANT…GFLI, and FWIS…LYIL. The tract at residues 828 to 852 is disordered; the sequence is QIVHNNGASNTSATSSIPMSGSRST. Over residues 832-843 the composition is skewed to low complexity; sequence NNGASNTSATSS. The ABC transporter 2 domain maps to 869 to 1121; the sequence is LCFNHVNYYV…KLVEYFEAVP (253 aa). An ATP-binding site is contributed by 914-921; it reads GVSGAGKT. The ABC transmembrane type-2 2 domain maps to 1194–1408; it reads SQCIANFWKQ…TIYGVVASQF (215 aa). 7 helical membrane passes run 1215-1234, 1249-1271, 1301-1321, 1331-1351, 1359-1379, 1389-1409, and 1439-1459; these read AMRY…VFWQ, LGAT…QPVV, VIYN…MIGY, FMFF…MLVA, ANIL…FLVV, WYYW…SQFG, and FLGY…FIFG.

It belongs to the ABC transporter superfamily. ABCG family. PDR (TC 3.A.1.205) subfamily.

It localises to the membrane. Functionally, may be a general defense protein. The polypeptide is ABC transporter G family member 48 (Oryza sativa subsp. japonica (Rice)).